The sequence spans 90 residues: uncharacterized protein (90 aa).

An N-terminal signal peptide occupies residues 1-18; it reads MSRALFAVVLAFPLIALA.

This is an uncharacterized protein from Escherichia coli (strain K12).